The following is a 583-amino-acid chain: Moesin/ezrin/radixin homolog 1 (583 aa).

The FERM domain occupies Met11 to Arg301. Disordered regions lie at residues Thr466–Ala518 and Arg539–Gly558. Over residues Glu476–Leu485 the composition is skewed to acidic residues. Residues Asp496–Ala518 show a composition bias toward basic and acidic residues. At Thr564 the chain carries Phosphothreonine.

In terms of assembly, interacts with cytoskeletal actin.

It localises to the cell junction. The protein localises to the adherens junction. It is found in the cell projection. Its subcellular location is the microvillus. The protein resides in the rhabdomere. It localises to the cell membrane. The protein localises to the cytoplasm. It is found in the cytoskeleton. Its function is as follows. Involved in connections of major cytoskeletal structures to the plasma membrane. The polypeptide is Moesin/ezrin/radixin homolog 1 (Aedes aegypti (Yellowfever mosquito)).